The primary structure comprises 327 residues: Aliphatic sulfonates import ATP-binding protein SsuB (327 aa).

A disordered region spans residues 21–54; the sequence is ELAQPRIADGDAQDAAVYERDGGAHAPPDGDRAD. The segment covering 37-54 has biased composition (basic and acidic residues); it reads VYERDGGAHAPPDGDRAD. Residues 66-285 enclose the ABC transporter domain; sequence VRLTRVSKRY…ARASAAFAAL (220 aa). 98 to 105 is an ATP binding site; that stretch reads GRSGCGKS. The disordered stretch occupies residues 300-327; sequence APAAPNAAGPEGASRGRAAPASGLRWAV.

This sequence belongs to the ABC transporter superfamily. Aliphatic sulfonates importer (TC 3.A.1.17.2) family. In terms of assembly, the complex is composed of two ATP-binding proteins (SsuB), two transmembrane proteins (SsuC) and a solute-binding protein (SsuA).

It localises to the cell inner membrane. It catalyses the reaction ATP + H2O + aliphatic sulfonate-[sulfonate-binding protein]Side 1 = ADP + phosphate + aliphatic sulfonateSide 2 + [sulfonate-binding protein]Side 1.. Part of the ABC transporter complex SsuABC involved in aliphatic sulfonates import. Responsible for energy coupling to the transport system. The sequence is that of Aliphatic sulfonates import ATP-binding protein SsuB from Burkholderia pseudomallei (strain K96243).